The sequence spans 148 residues: Protein NrdI (148 aa).

Belongs to the NrdI family.

Functionally, probably involved in ribonucleotide reductase function. The chain is Protein NrdI from Corynebacterium glutamicum (strain R).